The sequence spans 204 residues: N-(5'-phosphoribosyl)anthranilate isomerase (204 aa).

This sequence belongs to the TrpF family.

It catalyses the reaction N-(5-phospho-beta-D-ribosyl)anthranilate = 1-(2-carboxyphenylamino)-1-deoxy-D-ribulose 5-phosphate. It participates in amino-acid biosynthesis; L-tryptophan biosynthesis; L-tryptophan from chorismate: step 3/5. This Bacillus thuringiensis (strain Al Hakam) protein is N-(5'-phosphoribosyl)anthranilate isomerase.